The following is a 123-amino-acid chain: Ribosome-binding factor A (123 aa).

It belongs to the RbfA family. Monomer. Binds 30S ribosomal subunits, but not 50S ribosomal subunits or 70S ribosomes.

The protein localises to the cytoplasm. One of several proteins that assist in the late maturation steps of the functional core of the 30S ribosomal subunit. Associates with free 30S ribosomal subunits (but not with 30S subunits that are part of 70S ribosomes or polysomes). Required for efficient processing of 16S rRNA. May interact with the 5'-terminal helix region of 16S rRNA. This is Ribosome-binding factor A from Delftia acidovorans (strain DSM 14801 / SPH-1).